We begin with the raw amino-acid sequence, 268 residues long: Thymidylate synthase (268 aa).

DUMP contacts are provided by residues Arg-26 and 131-132 (RR). Catalysis depends on Cys-151, which acts as the Nucleophile. DUMP contacts are provided by residues 171 to 174 (RSAD), Asn-182, and 212 to 214 (HIY). Asp-174 serves as a coordination point for (6R)-5,10-methylene-5,6,7,8-tetrahydrofolate. Residue Ser-267 coordinates (6R)-5,10-methylene-5,6,7,8-tetrahydrofolate.

The protein belongs to the thymidylate synthase family. Bacterial-type ThyA subfamily. Homodimer.

It localises to the cytoplasm. The enzyme catalyses dUMP + (6R)-5,10-methylene-5,6,7,8-tetrahydrofolate = 7,8-dihydrofolate + dTMP. The protein operates within pyrimidine metabolism; dTTP biosynthesis. Its function is as follows. Catalyzes the reductive methylation of 2'-deoxyuridine-5'-monophosphate (dUMP) to 2'-deoxythymidine-5'-monophosphate (dTMP) while utilizing 5,10-methylenetetrahydrofolate (mTHF) as the methyl donor and reductant in the reaction, yielding dihydrofolate (DHF) as a by-product. This enzymatic reaction provides an intracellular de novo source of dTMP, an essential precursor for DNA biosynthesis. The protein is Thymidylate synthase of Corynebacterium aurimucosum (strain ATCC 700975 / DSM 44827 / CIP 107346 / CN-1) (Corynebacterium nigricans).